A 437-amino-acid polypeptide reads, in one-letter code: GTPase Era, mitochondrial (437 aa).

The N-terminal 43 residues, 1-43 (MAASSWRGAVLLRTVSGLWQAGPDAAREWMTRLPSLLGFQQRC), are a transit peptide targeting the mitochondrion. Residues 112–330 (RVLRVVLLGA…QYLLAQARPG (219 aa)) enclose the Era-type G domain. The G1 stretch occupies residues 120–127 (GAPNAGKS). Residue 120 to 127 (GAPNAGKS) coordinates GTP. The segment at 146–150 (HTTRS) is G2. Residues 167 to 170 (DTPG) form a G3 region. 167–171 (DTPGL) is a binding site for GTP. Serine 173 is modified (phosphoserine). 236 to 239 (NKVD) is a GTP binding site. The interval 236–239 (NKVD) is G4. The interval 264–296 (LKTKQALRSRPDTHCPSPAAQGPNPQPVRDPQQ) is disordered. The interval 308–310 (LSA) is G5. Residues 360 to 437 (LPEEVPYNVQ…QLRLSVKLLK (78 aa)) form the KH type-2 domain.

It belongs to the TRAFAC class TrmE-Era-EngA-EngB-Septin-like GTPase superfamily. Era GTPase family.

Its subcellular location is the mitochondrion matrix. The protein localises to the mitochondrion inner membrane. Functionally, probable GTPase that plays a role in the mitochondrial ribosomal small subunit assembly. Specifically binds the 12S mitochondrial rRNA (12S mt-rRNA) to a 33 nucleotide section delineating the 3' terminal stem-loop region. May act as a chaperone that protects the 12S mt-rRNA on the 28S mitoribosomal subunit during ribosomal small subunit assembly. The polypeptide is GTPase Era, mitochondrial (ERAL1) (Bos taurus (Bovine)).